The sequence spans 607 residues: Elongation factor 4 (607 aa).

The tr-type G domain occupies 11-193 (SRIRNFSIIA…QVVEKVPAPA (183 aa)). GTP contacts are provided by residues 23 to 28 (DHGKST) and 140 to 143 (NKID).

It belongs to the TRAFAC class translation factor GTPase superfamily. Classic translation factor GTPase family. LepA subfamily.

The protein resides in the cell membrane. The catalysed reaction is GTP + H2O = GDP + phosphate + H(+). In terms of biological role, required for accurate and efficient protein synthesis under certain stress conditions. May act as a fidelity factor of the translation reaction, by catalyzing a one-codon backward translocation of tRNAs on improperly translocated ribosomes. Back-translocation proceeds from a post-translocation (POST) complex to a pre-translocation (PRE) complex, thus giving elongation factor G a second chance to translocate the tRNAs correctly. Binds to ribosomes in a GTP-dependent manner. The chain is Elongation factor 4 from Shouchella clausii (strain KSM-K16) (Alkalihalobacillus clausii).